Here is a 491-residue protein sequence, read N- to C-terminus: Aspartyl/glutamyl-tRNA(Asn/Gln) amidotransferase subunit B (491 aa).

The protein belongs to the GatB/GatE family. GatB subfamily. As to quaternary structure, heterotrimer of A, B and C subunits.

The enzyme catalyses L-glutamyl-tRNA(Gln) + L-glutamine + ATP + H2O = L-glutaminyl-tRNA(Gln) + L-glutamate + ADP + phosphate + H(+). The catalysed reaction is L-aspartyl-tRNA(Asn) + L-glutamine + ATP + H2O = L-asparaginyl-tRNA(Asn) + L-glutamate + ADP + phosphate + 2 H(+). Functionally, allows the formation of correctly charged Asn-tRNA(Asn) or Gln-tRNA(Gln) through the transamidation of misacylated Asp-tRNA(Asn) or Glu-tRNA(Gln) in organisms which lack either or both of asparaginyl-tRNA or glutaminyl-tRNA synthetases. The reaction takes place in the presence of glutamine and ATP through an activated phospho-Asp-tRNA(Asn) or phospho-Glu-tRNA(Gln). The sequence is that of Aspartyl/glutamyl-tRNA(Asn/Gln) amidotransferase subunit B from Burkholderia ambifaria (strain ATCC BAA-244 / DSM 16087 / CCUG 44356 / LMG 19182 / AMMD) (Burkholderia cepacia (strain AMMD)).